We begin with the raw amino-acid sequence, 286 residues long: Aquaporin PIP1-1 (286 aa).

Residues 1-34 are disordered; that stretch reads MEGKEEDVRLGANKFSERQPIGTAAQSDKGYKEP. Topologically, residues 1–54 are cytoplasmic; that stretch reads MEGKEEDVRLGANKFSERQPIGTAAQSDKGYKEPPPAPLFEPGELTSWSFYRAG. The helical transmembrane segment at 55 to 75 threads the bilayer; sequence IAEFMATFLFLYITILTVMGV. Residues 76-88 are Extracellular-facing; sequence VKSNSKCSTVGIQ. The helical transmembrane segment at 89–109 threads the bilayer; the sequence is GIAWAFGGMIFALVYCTAGIS. Topologically, residues 110 to 131 are cytoplasmic; that stretch reads GGHINPAVTFGLFLARKLSLTR. Positions 114–116 match the NPA 1 motif; sequence NPA. A helical transmembrane segment spans residues 132 to 152; sequence ALFYMVMQCLGAICGAGVVKG. Topologically, residues 153–174 are extracellular; that stretch reads YQKGLYESNGGGANVVAPGYTK. A helical membrane pass occupies residues 175-195; sequence GDGLGAEIVGTFILVYTVFSA. The Cytoplasmic segment spans residues 196-208; the sequence is TDAKRNARDSHVP. A helical transmembrane segment spans residues 209–229; the sequence is ILAPLPIGFAVFLVHLATIPI. Topologically, residues 230 to 256 are extracellular; that stretch reads TGTGINPARSLGAAIIYNKKHAWDDHW. The NPA 2 signature appears at 235-237; sequence NPA. The helical transmembrane segment at 257-277 threads the bilayer; sequence IFWVGPFIGAALAAIYHQIVI. Residues 278–286 lie on the Cytoplasmic side of the membrane; it reads RAIPFKSRP.

The protein belongs to the MIP/aquaporin (TC 1.A.8) family. PIP (TC 1.A.8.11) subfamily. In terms of tissue distribution, expressed in leaves, roots, stems, flowers and fruits, with highest levels in roots.

The protein localises to the cell membrane. Its function is as follows. Water channel required to facilitate the transport of water across cell membrane; mercury-insensitive. Promotes primary root elongation and root hair formation. Contributes to the tolerance to multiple abiotic stresses including salt (NaCl), cold and water deprivation, by modulating cytosolic K(+)/Na(+) ratio, maintaining osmotic balance, and reducing membrane injury (e.g. oxidative injury). Also regulates the expression of abscisic acid (ABA)-responsive genes during dehydration and salt stresses. The polypeptide is Aquaporin PIP1-1 (Musa acuminata (Banana)).